The chain runs to 314 residues: ATP synthase gamma chain (314 aa).

It belongs to the ATPase gamma chain family. As to quaternary structure, F-type ATPases have 2 components, CF(1) - the catalytic core - and CF(0) - the membrane proton channel. CF(1) has five subunits: alpha(3), beta(3), gamma(1), delta(1), epsilon(1). CF(0) has three main subunits: a, b and c.

The protein localises to the cellular thylakoid membrane. Functionally, produces ATP from ADP in the presence of a proton gradient across the membrane. The gamma chain is believed to be important in regulating ATPase activity and the flow of protons through the CF(0) complex. The polypeptide is ATP synthase gamma chain (Picosynechococcus sp. (strain ATCC 27264 / PCC 7002 / PR-6) (Agmenellum quadruplicatum)).